Reading from the N-terminus, the 87-residue chain is Small ribosomal subunit protein uS15c (87 aa).

This sequence belongs to the universal ribosomal protein uS15 family. In terms of assembly, part of the 30S ribosomal subunit.

It is found in the plastid. The protein localises to the chloroplast. The chain is Small ribosomal subunit protein uS15c (rps15) from Solanum tuberosum (Potato).